The following is a 367-amino-acid chain: GMP synthase [glutamine-hydrolyzing] subunit B (367 aa).

Residues Phe2–Arg190 enclose the GMPS ATP-PPase domain. Ser29–Thr35 is a binding site for ATP.

As to quaternary structure, heterodimer composed of a glutamine amidotransferase subunit (A) and a GMP-binding subunit (B).

The enzyme catalyses XMP + L-glutamine + ATP + H2O = GMP + L-glutamate + AMP + diphosphate + 2 H(+). The protein operates within purine metabolism; GMP biosynthesis; GMP from XMP (L-Gln route): step 1/1. Its function is as follows. Catalyzes the synthesis of GMP from XMP. This chain is GMP synthase [glutamine-hydrolyzing] subunit B, found in Saccharolobus islandicus (strain M.16.27) (Sulfolobus islandicus).